The following is a 206-amino-acid chain: Thiamine-phosphate synthase (206 aa).

4-amino-2-methyl-5-(diphosphooxymethyl)pyrimidine contacts are provided by residues 35-39 and asparagine 67; that span reads QLRDK. Mg(2+) contacts are provided by aspartate 68 and aspartate 87. Serine 106 lines the 4-amino-2-methyl-5-(diphosphooxymethyl)pyrimidine pocket. 132-134 is a 2-[(2R,5Z)-2-carboxy-4-methylthiazol-5(2H)-ylidene]ethyl phosphate binding site; that stretch reads TGT. Residue lysine 135 participates in 4-amino-2-methyl-5-(diphosphooxymethyl)pyrimidine binding. 2-[(2R,5Z)-2-carboxy-4-methylthiazol-5(2H)-ylidene]ethyl phosphate contacts are provided by residues glycine 163 and 183–184; that span reads IS.

The protein belongs to the thiamine-phosphate synthase family. Mg(2+) serves as cofactor.

The catalysed reaction is 2-[(2R,5Z)-2-carboxy-4-methylthiazol-5(2H)-ylidene]ethyl phosphate + 4-amino-2-methyl-5-(diphosphooxymethyl)pyrimidine + 2 H(+) = thiamine phosphate + CO2 + diphosphate. It carries out the reaction 2-(2-carboxy-4-methylthiazol-5-yl)ethyl phosphate + 4-amino-2-methyl-5-(diphosphooxymethyl)pyrimidine + 2 H(+) = thiamine phosphate + CO2 + diphosphate. The enzyme catalyses 4-methyl-5-(2-phosphooxyethyl)-thiazole + 4-amino-2-methyl-5-(diphosphooxymethyl)pyrimidine + H(+) = thiamine phosphate + diphosphate. It functions in the pathway cofactor biosynthesis; thiamine diphosphate biosynthesis; thiamine phosphate from 4-amino-2-methyl-5-diphosphomethylpyrimidine and 4-methyl-5-(2-phosphoethyl)-thiazole: step 1/1. Functionally, condenses 4-methyl-5-(beta-hydroxyethyl)thiazole monophosphate (THZ-P) and 2-methyl-4-amino-5-hydroxymethyl pyrimidine pyrophosphate (HMP-PP) to form thiamine monophosphate (TMP). The sequence is that of Thiamine-phosphate synthase from Methanospirillum hungatei JF-1 (strain ATCC 27890 / DSM 864 / NBRC 100397 / JF-1).